The primary structure comprises 191 residues: Cell division protein SepF (191 aa).

Positions 153–178 are enriched in polar residues; that stretch reads FPEEVSPSNISSKKTSPYSLETNTTP. Positions 153-191 are disordered; it reads FPEEVSPSNISSKKTSPYSLETNTTPEPAWGESKLSAFS.

Belongs to the SepF family. Homodimer. Interacts with FtsZ.

The protein resides in the cytoplasm. In terms of biological role, cell division protein that is part of the divisome complex and is recruited early to the Z-ring. Probably stimulates Z-ring formation, perhaps through the cross-linking of FtsZ protofilaments. Its function overlaps with FtsA. The protein is Cell division protein SepF of Prochlorococcus marinus (strain MIT 9515).